The primary structure comprises 159 residues: Peptide methionine sulfoxide reductase MsrB (159 aa).

Residues 22–144 (RERLEANLTA…NSVSLQFVKA (123 aa)) form the MsrB domain. The Zn(2+) site is built by Cys61, Cys64, Cys110, and Cys113. Cys133 serves as the catalytic Nucleophile.

The protein belongs to the MsrB Met sulfoxide reductase family. Requires Zn(2+) as cofactor.

It carries out the reaction L-methionyl-[protein] + [thioredoxin]-disulfide + H2O = L-methionyl-(R)-S-oxide-[protein] + [thioredoxin]-dithiol. The polypeptide is Peptide methionine sulfoxide reductase MsrB (Caulobacter vibrioides (strain ATCC 19089 / CIP 103742 / CB 15) (Caulobacter crescentus)).